The following is a 753-amino-acid chain: Nuclear hormone receptor family member daf-12 (753 aa).

The segment at methionine 1–glutamate 109 is disordered. Basic and acidic residues predominate over residues asparagine 20–valine 29. Residues arginine 30–serine 44 show a composition bias toward basic residues. Residues glutamine 115–asparagine 190 constitute a DNA-binding region (nuclear receptor). 2 consecutive NR C4-type zinc fingers follow at residues cysteine 118–cysteine 138 and cysteine 154–cysteine 173. The short motif at glutamate 191 to glycine 206 is the Nuclear localization signal element. 3 disordered regions span residues lysine 198–proline 251, asparagine 266–proline 314, and glycine 376–histidine 410. Residues arginine 201–arginine 211 show a composition bias toward polar residues. A compositionally biased stretch (low complexity) spans serine 212–proline 227. Composition is skewed to polar residues over residues proline 285 to methionine 301 and methionine 394 to histidine 410. The region spanning alanine 516–lysine 753 is the NR LBD domain.

The protein belongs to the nuclear hormone receptor family. As to quaternary structure, interacts with din-1 isoform d. As to expression, expressed throughout muscles of the pharynx. Expressed in epidermal seam cells, the vulva, head neurons, mature spermatheca, uterus and intestine.

The protein localises to the nucleus. Its function is as follows. Nuclear receptor which binds directly to response elements in target gene promoters. Activity is modulated by binding of steroid hormone ligands that include dafachronic acids. Regulates expression of genes involved in postembryonic development and the dauer diapause, in response to environmental cues. Inhibits the expression of let-7 family members when bound to corepressor din-1s which is an isoform of din-1. Plays a role in controlling the timing of seam cell development during the larval stages. Has a role in the immune response to bacterial infection, via regulation of let-7 miRNAs. Controls expression of genes that promote the aerobic catabolism of fatty acids for reproductive growth. May be involved in thermotolerance. In Caenorhabditis elegans, this protein is Nuclear hormone receptor family member daf-12.